Consider the following 169-residue polypeptide: uncharacterized protein (169 aa).

Positions 4 to 160 (IEVKRLLVNY…EGVKEQLSED (157 aa)) constitute an N-acetyltransferase domain.

This is an uncharacterized protein from Halalkalibacterium halodurans (strain ATCC BAA-125 / DSM 18197 / FERM 7344 / JCM 9153 / C-125) (Bacillus halodurans).